The chain runs to 424 residues: Tyrosine--tRNA ligase (424 aa).

Tyr36 contributes to the L-tyrosine binding site. A 'HIGH' region motif is present at residues 41–50; the sequence is PTAPSLHAGH. L-tyrosine is bound by residues Tyr171 and Gln175. Residues 231 to 235 carry the 'KMSKS' region motif; that stretch reads KFGKS. Lys234 provides a ligand contact to ATP. Residues 356–413 enclose the S4 RNA-binding domain; that stretch reads DGIVDLLVASGLSASKGAARRTIHEGGVSVNNIRVDNEEWVPQSSDFLHGRWLVLRRG.

The protein belongs to the class-I aminoacyl-tRNA synthetase family. TyrS type 1 subfamily. Homodimer.

The protein localises to the cytoplasm. The catalysed reaction is tRNA(Tyr) + L-tyrosine + ATP = L-tyrosyl-tRNA(Tyr) + AMP + diphosphate + H(+). Catalyzes the attachment of tyrosine to tRNA(Tyr) in a two-step reaction: tyrosine is first activated by ATP to form Tyr-AMP and then transferred to the acceptor end of tRNA(Tyr). This Mycobacterium bovis (strain ATCC BAA-935 / AF2122/97) protein is Tyrosine--tRNA ligase.